The chain runs to 239 residues: Ribosomal RNA small subunit methyltransferase G (239 aa).

Residues G78, F83, 129–130 (AE), and R148 contribute to the S-adenosyl-L-methionine site.

The protein belongs to the methyltransferase superfamily. RNA methyltransferase RsmG family.

Its subcellular location is the cytoplasm. In terms of biological role, specifically methylates the N7 position of a guanine in 16S rRNA. The sequence is that of Ribosomal RNA small subunit methyltransferase G from Clostridium botulinum (strain Alaska E43 / Type E3).